We begin with the raw amino-acid sequence, 523 residues long: Maturase K (523 aa).

The protein belongs to the intron maturase 2 family. MatK subfamily.

The protein resides in the plastid. It is found in the chloroplast. Functionally, usually encoded in the trnK tRNA gene intron. Probably assists in splicing its own and other chloroplast group II introns. This is Maturase K from Asphodeline lutea (King's spear).